A 193-amino-acid chain; its full sequence is Recombination protein RecR (193 aa).

The C4-type zinc finger occupies 61–76 (CSSCNALSESEVCEIC). The Toprim domain maps to 84–170 (SQLCMVLHPR…TFTKIAQGVP (87 aa)).

It belongs to the RecR family.

Functionally, may play a role in DNA repair. It seems to be involved in an RecBC-independent recombinational process of DNA repair. It may act with RecF and RecO. The protein is Recombination protein RecR of Helicobacter pylori (strain P12).